A 20-amino-acid chain; its full sequence is Brevinin-1DYa (20 aa).

A disulfide bridge links Cys-14 with Cys-20.

As to expression, expressed by the skin glands.

It localises to the secreted. In terms of biological role, antimicrobial peptide. Has low activity against the Gram-positive bacterium S.aureus and the Gram-negative bacterium E.coli (MIC&lt;15 uM). Has a strong hemolytic activity. This is Brevinin-1DYa from Rana dybowskii (Dybovsky's frog).